We begin with the raw amino-acid sequence, 410 residues long: Lissencephaly-1 homolog A (410 aa).

The region spanning Gln7–Met39 is the LisH domain. A coiled-coil region spans residues Thr56–Gly82. WD repeat units lie at residues Gly106–Lys147, Gly148–Thr187, Gly190–Thr229, Gly232–Glu271, Glu274–Thr333, Gly336–Thr375, and Ala378–Arg410.

It belongs to the WD repeat LIS1/nudF family. In terms of assembly, can self-associate. Component of the cytosolic PAF-AH (I) heterotetrameric enzyme, which is composed of PAFAH1B1 (beta), PAFAH1B2 (alpha2) and PAFAH1B3 (alpha1) subunits. The catalytic activity of the enzyme resides in the alpha1 (PAFAH1B3) and alpha2 (PAFAH1B2) subunits, whereas the beta subunit (PAFAH1B1) has regulatory activity. Trimer formation is not essential for the catalytic activity. Interacts with dynein, dynactin, nde1 and ndel1.

Its subcellular location is the cytoplasm. The protein resides in the cytoskeleton. It localises to the microtubule organizing center. It is found in the centrosome. In terms of biological role, regulatory subunit (beta subunit) of the cytosolic type I platelet-activating factor (PAF) acetylhydrolase (PAF-AH (I)), an enzyme that catalyzes the hydrolyze of the acetyl group at the sn-2 position of PAF and its analogs and participates in PAF inactivation. Regulates the PAF-AH (I) activity in a catalytic dimer composition-dependent manner. Positively regulates the activity of the minus-end directed microtubule motor protein dynein. May enhance dynein-mediated microtubule sliding by targeting dynein to the microtubule plus end. Required for several dynein- and microtubule-dependent processes such as the maintenance of Golgi integrity, the peripheral transport of microtubule fragments and the coupling of the nucleus and centrosome. May be required for proliferation of neuronal precursors and neuronal migration. This is Lissencephaly-1 homolog A (pafah1b1-1) from Salmo salar (Atlantic salmon).